The chain runs to 439 residues: MMPPKPAAEDVADEQPEPPDEDPDVAEADPTGRYLRYREIIGSGSSKTVYKAFDAVDGIEVAWGKVEINERIMGSSKELQRLRTEIQLLKSLQHKHILKLYASWVDTNRRTVNIVTELFTSGNLREYRTKHKKVDMKAMRRWAKQILTGLEYLHSQKPPIIHRDLKCDNIFINGNHGKVKIGDFGLAMVMQQRKTRSIQGTIEFMAPELFGENYNELVDIYSFGMCMLEMVTCECPYSECKGFIQIYKKITEGVKPAALSKVKDAEVRGFIESCLASVSDRLPASELLKSPFLQSDDANHRSSNSVQEPVKFPENNFTKDEPIFVSLAPNNGTVNGKEQSFILVLQKSDFLLEGNMSTTNPVMLFLRFPGPDGKFKNVQFPFDMEKDTSLSVSTEMVEQLELPEWNNPVLAELIDAFLLHILPSWKPCVKVGKMLPSSS.

A disordered region spans residues M1–P30. The segment covering D10 to E27 has biased composition (acidic residues). Residues L35–L293 enclose the Protein kinase domain. ATP contacts are provided by residues T116–F119 and K166. D183 functions as the Proton acceptor in the catalytic mechanism.

It belongs to the protein kinase superfamily. Ser/Thr protein kinase family. WNK subfamily.

The enzyme catalyses L-seryl-[protein] + ATP = O-phospho-L-seryl-[protein] + ADP + H(+). The catalysed reaction is L-threonyl-[protein] + ATP = O-phospho-L-threonyl-[protein] + ADP + H(+). The polypeptide is Probable serine/threonine-protein kinase WNK6 (WNK6) (Oryza sativa subsp. japonica (Rice)).